A 192-amino-acid chain; its full sequence is Der GTPase-activating protein YihI (192 aa).

The segment at 1 to 80 (MSRTKKTRRI…KAAVKEVKDP (80 aa)) is disordered. 3 stretches are compositionally biased toward basic and acidic residues: residues 9-25 (RITDIMPARKADKKPEQ), 37-48 (TRYELDAKAREE), and 65-80 (DPAEQKKAAVKEVKDP).

It belongs to the YihI family. In terms of assembly, interacts with Der.

A GTPase-activating protein (GAP) that modifies Der/EngA GTPase function. May play a role in ribosome biogenesis. This Actinobacillus pleuropneumoniae serotype 5b (strain L20) protein is Der GTPase-activating protein YihI.